A 275-amino-acid chain; its full sequence is Diaminopimelate epimerase (275 aa).

Substrate-binding residues include Asn12, Gln45, and Asn65. Cys74 (proton donor) is an active-site residue. Residues 75–76, Asn158, Asn191, and 209–210 each bind substrate; these read GN and ER. The active-site Proton acceptor is the Cys218. 219–220 serves as a coordination point for substrate; the sequence is GT.

The protein belongs to the diaminopimelate epimerase family. Homodimer.

The protein localises to the cytoplasm. It carries out the reaction (2S,6S)-2,6-diaminopimelate = meso-2,6-diaminopimelate. It participates in amino-acid biosynthesis; L-lysine biosynthesis via DAP pathway; DL-2,6-diaminopimelate from LL-2,6-diaminopimelate: step 1/1. Its function is as follows. Catalyzes the stereoinversion of LL-2,6-diaminopimelate (L,L-DAP) to meso-diaminopimelate (meso-DAP), a precursor of L-lysine and an essential component of the bacterial peptidoglycan. This chain is Diaminopimelate epimerase, found in Shewanella sp. (strain MR-4).